Reading from the N-terminus, the 161-residue chain is Allophycocyanin alpha chain (161 aa).

Position 71 is an N4-methylasparagine (Asn-71). Cys-81 contributes to the (2R,3E)-phycocyanobilin binding site.

It belongs to the phycobiliprotein family. As to quaternary structure, heterodimer of an alpha and a beta chain. Post-translationally, contains one covalently linked phycocyanobilin chromophore.

It localises to the plastid. The protein resides in the chloroplast thylakoid membrane. In terms of biological role, light-harvesting photosynthetic bile pigment-protein from the phycobiliprotein complex. Allophycocyanin has a maximum absorption at approximately 650 nanometers. The chain is Allophycocyanin alpha chain (apcA) from Cyanidium caldarium (Red alga).